The primary structure comprises 1085 residues: Carbamoyl phosphate synthase large chain (1085 aa).

The carboxyphosphate synthetic domain stretch occupies residues 1-399 (MPKRTDISNI…ALQKALCSLE (399 aa)). ATP is bound by residues Arg-127, Arg-167, Gly-174, Glu-206, Leu-208, Glu-213, Gly-239, Val-240, His-241, Gln-283, and Glu-297. The ATP-grasp 1 domain maps to 131–326 (KEAMLKIGMD…IAKVATMLAV (196 aa)). Positions 283, 297, and 299 each coordinate Mg(2+). Residues Gln-283, Glu-297, and Asn-299 each coordinate Mn(2+). Positions 400–551 (NNWLGFESLS…YAPNPLPPIG (152 aa)) are oligomerization domain. The tract at residues 552 to 951 (NKQEKQEKKI…AFFKAQTACF (400 aa)) is carbamoyl phosphate synthetic domain. The ATP-grasp 2 domain maps to 678 to 871 (SLFLKELDIK…LAKVATRVMV (194 aa)). 10 residues coordinate ATP: Arg-714, Lys-756, Leu-758, Glu-763, Gly-788, Ile-789, His-790, Ser-791, Gln-830, and Glu-842. Mg(2+)-binding residues include Gln-830, Glu-842, and Asn-844. Residues Gln-830, Glu-842, and Asn-844 each contribute to the Mn(2+) site. One can recognise an MGS-like domain in the interval 952–1085 (NPIKNKGLIF…ELLALQDYLK (134 aa)). Residues 952–1085 (NPIKNKGLIF…ELLALQDYLK (134 aa)) are allosteric domain.

Belongs to the CarB family. In terms of assembly, composed of two chains; the small (or glutamine) chain promotes the hydrolysis of glutamine to ammonia, which is used by the large (or ammonia) chain to synthesize carbamoyl phosphate. Tetramer of heterodimers (alpha,beta)4. Mg(2+) serves as cofactor. Requires Mn(2+) as cofactor.

It carries out the reaction hydrogencarbonate + L-glutamine + 2 ATP + H2O = carbamoyl phosphate + L-glutamate + 2 ADP + phosphate + 2 H(+). The enzyme catalyses hydrogencarbonate + NH4(+) + 2 ATP = carbamoyl phosphate + 2 ADP + phosphate + 2 H(+). It functions in the pathway amino-acid biosynthesis; L-arginine biosynthesis; carbamoyl phosphate from bicarbonate: step 1/1. It participates in pyrimidine metabolism; UMP biosynthesis via de novo pathway; (S)-dihydroorotate from bicarbonate: step 1/3. Large subunit of the glutamine-dependent carbamoyl phosphate synthetase (CPSase). CPSase catalyzes the formation of carbamoyl phosphate from the ammonia moiety of glutamine, carbonate, and phosphate donated by ATP, constituting the first step of 2 biosynthetic pathways, one leading to arginine and/or urea and the other to pyrimidine nucleotides. The large subunit (synthetase) binds the substrates ammonia (free or transferred from glutamine from the small subunit), hydrogencarbonate and ATP and carries out an ATP-coupled ligase reaction, activating hydrogencarbonate by forming carboxy phosphate which reacts with ammonia to form carbamoyl phosphate. The polypeptide is Carbamoyl phosphate synthase large chain (Helicobacter pylori (strain J99 / ATCC 700824) (Campylobacter pylori J99)).